Here is a 110-residue protein sequence, read N- to C-terminus: UPF0235 protein Mpop_2087 (110 aa).

Belongs to the UPF0235 family.

This chain is UPF0235 protein Mpop_2087, found in Methylorubrum populi (strain ATCC BAA-705 / NCIMB 13946 / BJ001) (Methylobacterium populi).